We begin with the raw amino-acid sequence, 94 residues long: Acylphosphatase (94 aa).

The Acylphosphatase-like domain occupies 5–94 (RLTAFVHGHV…PRDVEGFVER (90 aa)). Residues Arg-20 and Asn-38 contribute to the active site.

This sequence belongs to the acylphosphatase family.

The catalysed reaction is an acyl phosphate + H2O = a carboxylate + phosphate + H(+). This chain is Acylphosphatase (acyP), found in Corynebacterium glutamicum (strain R).